Here is a 362-residue protein sequence, read N- to C-terminus: Histidine protein methyltransferase 1 homolog (362 aa).

Positions 28-89 are disordered; that stretch reads KSQKGKEDKN…ACEKQPSLKP (62 aa). The span at 55 to 73 shows a compositional bias: polar residues; sequence SLGSAASSEDTDSPPSTAD. Phosphoserine is present on residues Ser62 and Ser67. Tele-methylhistidine is present on His144. Residues 158–162, Gly185, and 206–208 contribute to the S-adenosyl-L-methionine site; these read IWECT and QDY. Positions 237-243 match the Nuclear localization signal motif; it reads PAGKRQR. S-adenosyl-L-methionine is bound by residues 259–261 and Ser283; that span reads GEW.

This sequence belongs to the methyltransferase superfamily. METTL18 family. As to quaternary structure, interacts with GRWD1 and members of the heat shock protein 90 and 70 families; these proteins may possibly be methylation substrates for the enzyme. Monomethylated at His-144 through automethylation. Automethylation at His-144 positively regulates the methyltransferase activity toward RPL3. Probably methylated on other residues.

It localises to the cytoplasm. It is found in the cytosol. The protein localises to the nucleus. Its subcellular location is the nucleolus. It catalyses the reaction L-histidyl-[protein] + S-adenosyl-L-methionine = N(tele)-methyl-L-histidyl-[protein] + S-adenosyl-L-homocysteine + H(+). In terms of biological role, protein-L-histidine N-tele-methyltransferase that specifically monomethylates RPL3, thereby regulating translation elongation. Histidine methylation of RPL3 regulates translation elongation by slowing ribosome traversal on tyrosine codons: slower elongation provides enough time for proper folding of synthesized proteins and prevents cellular aggregation of tyrosine-rich proteins. In Rattus norvegicus (Rat), this protein is Histidine protein methyltransferase 1 homolog.